The primary structure comprises 247 residues: 5-oxoprolinase subunit A (247 aa).

This sequence belongs to the LamB/PxpA family. Forms a complex composed of PxpA, PxpB and PxpC.

It carries out the reaction 5-oxo-L-proline + ATP + 2 H2O = L-glutamate + ADP + phosphate + H(+). Its function is as follows. Catalyzes the cleavage of 5-oxoproline to form L-glutamate coupled to the hydrolysis of ATP to ADP and inorganic phosphate. In Vibrio vulnificus (strain CMCP6), this protein is 5-oxoprolinase subunit A.